The chain runs to 317 residues: 8-oxo-(d)GTP phosphatase (317 aa).

The 134-residue stretch at R15–K148 folds into the Nudix hydrolase domain. Substrate is bound by residues R43 to Y46, D48, and K53 to K55. Mg(2+)-binding residues include K53, E69, and E73. Residues G54 to G75 carry the Nudix box motif. Y89, K99, E118, and Y136 together coordinate substrate. E118 is a Mg(2+) binding site.

Belongs to the Nudix hydrolase family. Mg(2+) is required as a cofactor.

It catalyses the reaction 8-oxo-dGTP + H2O = 8-oxo-dGDP + phosphate + H(+). It carries out the reaction 8-oxo-GTP + H2O = 8-oxo-GDP + phosphate + H(+). Functionally, catalyzes the conversion of 8-oxo-dGTP to 8-oxo-dGDP, and 8-oxo-GTP to 8-oxo-GDP. The protein is 8-oxo-(d)GTP phosphatase of Mycobacterium tuberculosis (strain CDC 1551 / Oshkosh).